The chain runs to 496 residues: Adenosine transporter 1 (496 aa).

The Cytoplasmic portion of the chain corresponds to 1–26 (MSSHTSTPNHASAAPPRKWYDMTSAE). The chain crosses the membrane as a helical span at residues 27–47 (FYVYVVAFMCGISMLMPINAV). Over 48-77 (FSAPSYMLQYYLYATKDPNHVPQMTNFWSN) the chain is Extracellular. A helical membrane pass occupies residues 78–98 (VMTYYNLIGLVTGLVMEPLTL). The Cytoplasmic segment spans residues 99–107 (LKSFRKIPM). The chain crosses the membrane as a helical span at residues 108 to 128 (LVRLLGGLCILIVEIIVLMAV). Residues 129–135 (PARGTTE) lie on the Extracellular side of the membrane. A helical transmembrane segment spans residues 136–156 (GGAVATMCIAGFIGGLGKSIF). The Cytoplasmic portion of the chain corresponds to 157–172 (ESTVYGMFGAFPPSFT). A helical transmembrane segment spans residues 173 to 193 (SIMMGGVGISGVLTSLIQIIV). Residues 194-208 (KAALPDTYEGVKKQS) are Extracellular-facing. The helical transmembrane segment at 209-229 (YIYYSLDVGIQAATFIALIMM) threads the bilayer. Residues 230-336 (RFNSFAQLHF…SIISVLRSIK (107 aa)) lie on the Cytoplasmic side of the membrane. Residues 337 to 357 (WMFVSCAFVFVVTLFLFPGIA) traverse the membrane as a helical segment. The Extracellular segment spans residues 358–365 (TGMFPESK). The chain crosses the membrane as a helical span at residues 366 to 386 (WFATVAVFIFNCCDVLGRVAP). Topologically, residues 387 to 399 (ALRFMWPRSYNQR) are cytoplasmic. A helical membrane pass occupies residues 400–420 (WIIVAASFARVIFVPLLLLYS). Over 421 to 431 (YHYIPSEAYGY) the chain is Extracellular. Residues 432–452 (VIMVIFGFSSGYVASMSLTLG) traverse the membrane as a helical segment. Residues 453–464 (PQSKGIDNDGKR) lie on the Cytoplasmic side of the membrane. A helical transmembrane segment spans residues 465–485 (FVAGTLMGISILVGGTIGTVL). Residues 486–496 (SIMTQTIREKY) are Extracellular-facing.

This sequence belongs to the SLC29A/ENT transporter (TC 2.A.57) family.

Its subcellular location is the membrane. It catalyses the reaction adenosine(in) = adenosine(out). Adenosine transporter. This is Adenosine transporter 1 from Crithidia fasciculata.